The sequence spans 483 residues: MARAIMFQGTGSDVGKSVLVAGLCRVARNRGLKVRPFKPQNMSNNAAVSDDGGEIGRAQWLQALACGVPSSVHMNPVLLKPQTDMGSQLIVQGQVRGEARGRYYQELKPQLMAAVMESFAKVGDGADLVLVEGAGSPAEINLRAGDIANMGFATHADVPVVLVGDIDRGGVIASLVGTHTILPQEDRAMVRGFLINKFRGDISLFDDGLAAITRFTGWRSFGVVPWLKAVSRLPAEDSVILERAVRGDKKALIVAVPMLPRIANFDDLDPLKAEPAVEVVMVPPGSSLPADAGLVVLPGTKSTIADLLALRENGWDRELVAHVKRGGHVLGICGGFQMLGRRISDPAGIEGNVRDIEGLGLLDIETMMEPEKVVRNVEAVSLLHDEPLEGYEIHIGRTSGPDMARPFARIGDHDDGAVSPDGRIMGTYLHGVFSADRFRHHFLRALGVEGGQMNYRESVEEALDELAEGLEASLDIDGLFALA.

The GATase cobBQ-type domain maps to A251–F438. The active-site Nucleophile is the C333. Residue H430 is part of the active site.

This sequence belongs to the CobB/CobQ family. CobQ subfamily.

It participates in cofactor biosynthesis; adenosylcobalamin biosynthesis. Catalyzes amidations at positions B, D, E, and G on adenosylcobyrinic A,C-diamide. NH(2) groups are provided by glutamine, and one molecule of ATP is hydrogenolyzed for each amidation. The protein is Cobyric acid synthase of Brucella canis (strain ATCC 23365 / NCTC 10854 / RM-666).